We begin with the raw amino-acid sequence, 73 residues long: Salivary protein FS48 (73 aa).

Residues 1–21 (MKFAFAIFVVLAILHTELISA) form the signal peptide.

Its subcellular location is the secreted. Its function is as follows. Salivary protein that inhibits host voltage-gated potassium channels Kv1.1/KCNA1, Kv1.2/KCNA2 and Kv1.3/KCNA3 likely via a voltage-independent pore-blocking mechanism. Suppresses expression of the Kv1.3/KCNA3 channel in lipopolysaccharide (LPS)-stimulated mouse macrophages and human T-cells. Down-regulates secretion of nitric oxide (NO) and inflammatory cytokines, such as TNF-alpha/TNF, IL-1beta/IL1B and IL6, in LPS-stimulated mouse macrophages in a manner dependent on Kv1.3/KCNA3 channel blockage. Reduces activation of MAPK and NF-kappa-B signaling pathways in LPS-stimulated mouse macrophages. Modulates intracellular Ca(2+) signaling in human PMA/ionomycin-triggered T-cells. Interferes with the activation of the MAPK, NF-kappa-B and NFATc1 pathways in human PMA/ionomycin-triggered T-cells. Reduces proliferation of human PMA/ionomycin-triggered T-cells. Down-regulates secretion of cytokines, such as TNF-alpha/TNF and IL2, in human PMA/ionomycin-triggered T-cells. The protein is Salivary protein FS48 of Xenopsylla cheopis (Oriental rat flea).